The primary structure comprises 148 residues: Deoxyuridine 5'-triphosphate nucleotidohydrolase (148 aa).

Residues 67-69 (RSG), Asn80, 84-86 (LID), and Met94 each bind substrate.

The protein belongs to the dUTPase family. It depends on Mg(2+) as a cofactor.

The catalysed reaction is dUTP + H2O = dUMP + diphosphate + H(+). Its pathway is pyrimidine metabolism; dUMP biosynthesis; dUMP from dCTP (dUTP route): step 2/2. Its function is as follows. This enzyme is involved in nucleotide metabolism: it produces dUMP, the immediate precursor of thymidine nucleotides and it decreases the intracellular concentration of dUTP so that uracil cannot be incorporated into DNA. The protein is Deoxyuridine 5'-triphosphate nucleotidohydrolase of Burkholderia cenocepacia (strain HI2424).